A 126-amino-acid polypeptide reads, in one-letter code: Small ribosomal subunit protein uS13 (126 aa).

Residues 98–126 form a disordered region; the sequence is PLRGQSTKNNARTRKGKKKTVANKKKATK. Over residues 108–126 the composition is skewed to basic residues; the sequence is ARTRKGKKKTVANKKKATK.

The protein belongs to the universal ribosomal protein uS13 family. In terms of assembly, part of the 30S ribosomal subunit. Forms a loose heterodimer with protein S19. Forms two bridges to the 50S subunit in the 70S ribosome.

Located at the top of the head of the 30S subunit, it contacts several helices of the 16S rRNA. In the 70S ribosome it contacts the 23S rRNA (bridge B1a) and protein L5 of the 50S subunit (bridge B1b), connecting the 2 subunits; these bridges are implicated in subunit movement. Contacts the tRNAs in the A and P-sites. This Parabacteroides distasonis (strain ATCC 8503 / DSM 20701 / CIP 104284 / JCM 5825 / NCTC 11152) protein is Small ribosomal subunit protein uS13.